The sequence spans 251 residues: Putative F-box protein PP2-B12 (251 aa).

The 46-residue stretch at 1-46 (MNFLDLPEECIATMISFTSPFDACRISAVSKLLRSAADSNTTWERF) folds into the F-box domain.

The protein is Putative F-box protein PP2-B12 (PP2B12) of Arabidopsis thaliana (Mouse-ear cress).